The chain runs to 474 residues: tRNA (adenine(58)-N(1))-methyltransferase catalytic subunit trm61 (474 aa).

The disordered stretch occupies residues 75 to 109; that stretch reads DTGSRGRTQKMKRKADELDSSTQAEDKPSPQTPVA. S-adenosyl-L-methionine is bound by residues 163–165, Glu197, Arg202, 225–226, and Asp250; these read SGS and DV. Disordered regions lie at residues 356–390 and 423–474; these read LFRA…VPVY and DEKR…SQKE. The segment covering 358-367 has biased composition (polar residues); sequence RATQNQSDGD. Residues 423–432 are compositionally biased toward basic and acidic residues; it reads DEKRCREKWP. Residues 434 to 443 show a composition bias toward polar residues; that stretch reads NRVQEPQGPQ. The span at 450–474 shows a compositional bias: basic and acidic residues; the sequence is KRESREKRDLQRKEQSQPETESQKE.

Belongs to the class I-like SAM-binding methyltransferase superfamily. TRM61 family. Heterotetramer; composed of two copies of TRM6 and two copies of TRM61.

It localises to the nucleus. The catalysed reaction is adenosine(58) in tRNA + S-adenosyl-L-methionine = N(1)-methyladenosine(58) in tRNA + S-adenosyl-L-homocysteine + H(+). Its function is as follows. Catalytic subunit of tRNA (adenine-N(1)-)-methyltransferase, which catalyzes the formation of N(1)-methyladenine at position 58 (m1A58) in initiator methionyl-tRNA. The protein is tRNA (adenine(58)-N(1))-methyltransferase catalytic subunit trm61 (trm61) of Aspergillus oryzae (strain ATCC 42149 / RIB 40) (Yellow koji mold).